Here is a 405-residue protein sequence, read N- to C-terminus: Cytoplasmic tRNA 2-thiolation protein 2 (405 aa).

It belongs to the CTU2/NCS2 family.

It is found in the cytoplasm. The protein operates within tRNA modification; 5-methoxycarbonylmethyl-2-thiouridine-tRNA biosynthesis. Its function is as follows. Plays a central role in 2-thiolation of mcm(5)S(2)U at tRNA wobble positions of tRNA(Lys), tRNA(Glu) and tRNA(Gln). May act by forming a heterodimer with NCS6/CTU1 that ligates sulfur from thiocarboxylated URM1 onto the uridine of tRNAs at wobble position. The polypeptide is Cytoplasmic tRNA 2-thiolation protein 2 (Drosophila simulans (Fruit fly)).